The chain runs to 298 residues: 4-hydroxy-tetrahydrodipicolinate synthase (298 aa).

Position 48 (threonine 48) interacts with pyruvate. Tyrosine 137 functions as the Proton donor/acceptor in the catalytic mechanism. Lysine 166 functions as the Schiff-base intermediate with substrate in the catalytic mechanism. A pyruvate-binding site is contributed by isoleucine 207.

Belongs to the DapA family. As to quaternary structure, homotetramer; dimer of dimers.

Its subcellular location is the cytoplasm. The enzyme catalyses L-aspartate 4-semialdehyde + pyruvate = (2S,4S)-4-hydroxy-2,3,4,5-tetrahydrodipicolinate + H2O + H(+). Its pathway is amino-acid biosynthesis; L-lysine biosynthesis via DAP pathway; (S)-tetrahydrodipicolinate from L-aspartate: step 3/4. In terms of biological role, catalyzes the condensation of (S)-aspartate-beta-semialdehyde [(S)-ASA] and pyruvate to 4-hydroxy-tetrahydrodipicolinate (HTPA). The polypeptide is 4-hydroxy-tetrahydrodipicolinate synthase (Campylobacter hominis (strain ATCC BAA-381 / DSM 21671 / CCUG 45161 / LMG 19568 / NCTC 13146 / CH001A)).